The chain runs to 48 residues: Large ribosomal subunit protein bL33B (48 aa).

Belongs to the bacterial ribosomal protein bL33 family.

This Mycoplasmoides gallisepticum (strain R(low / passage 15 / clone 2)) (Mycoplasma gallisepticum) protein is Large ribosomal subunit protein bL33B (rpmG 2).